Reading from the N-terminus, the 127-residue chain is MARITAEDCNKIIPDRFRLVVLATRYAKLLNYKVETNQIKKEKRDKPPVISLRRIAAGKVSVPQLEQDLINSLRTRMMIEPLINQDESEDVEEKFEYLPEVYIGEDYSDLDDQIFINENGEDYETDK.

The protein belongs to the RNA polymerase subunit omega family. As to quaternary structure, the RNAP catalytic core consists of 2 alpha, 1 beta, 1 beta' and 1 omega subunit. When a sigma factor is associated with the core the holoenzyme is formed, which can initiate transcription.

It carries out the reaction RNA(n) + a ribonucleoside 5'-triphosphate = RNA(n+1) + diphosphate. In terms of biological role, promotes RNA polymerase assembly. Latches the N- and C-terminal regions of the beta' subunit thereby facilitating its interaction with the beta and alpha subunits. The polypeptide is DNA-directed RNA polymerase subunit omega (rpoZ) (Rickettsia prowazekii (strain Madrid E)).